The primary structure comprises 1070 residues: Envelopment polyprotein (1070 aa).

Positions 1-17 (MMFSRVMQLALICAVTC) are cleaved as a signal peptide. Over 18-457 (EDNPCLWERF…SNPQCYPYGK (440 aa)) the chain is Lumenal. Cystine bridges form between Cys-22–Cys-55, Cys-152–Cys-165, Cys-211–Cys-221, Cys-267–Cys-309, Cys-296–Cys-301, Cys-353–Cys-356, Cys-360–Cys-429, and Cys-380–Cys-385. N-linked (GlcNAc...) asparagine; by host glycosylation occurs at Asn-269. The helical transmembrane segment at 458–478 (WFLLFLILATLYIIVALLKTI) threads the bilayer. The Cytoplasmic portion of the chain corresponds to 479 to 536 (MRIFMACLSVLYGPFIIIIKISRCLGRLGKRKGERTYVRLMEALDDERKPEVVRAPVS). A golgi retention signal region spans residues 480-522 (RIFMACLSVLYGPFIIIIKISRCLGRLGKRKGERTYVRLMEAL). An internal signal sequence for glycoprotein C region spans residues 541–560 (KQPRIVLFIVLALLVHMALC). Positions 550-560 (VLALLVHMALC) are excised as a propeptide. Over 550-1023 (VLALLVHMAL…NWLDTLFGAS (474 aa)) the chain is Lumenal. 10 cysteine pairs are disulfide-bonded: Cys-561-Cys-602, Cys-574-Cys-584, Cys-642-Cys-831, Cys-648-Cys-696, Cys-654-Cys-703, Cys-659-Cys-685, Cys-689-Cys-694, Cys-799-Cys-813, Cys-896-Cys-966, and Cys-906-Cys-909. The fusion loop stretch occupies residues 648-654 (CRWAGSC). The segment at 690–701 (GGAACGCFNAAP) is fusion loop. Residues 1024-1044 (LLGKILGIGLAILSPFILILI) form a helical membrane-spanning segment. Over 1045–1070 (LRWILRVVLRRSRIRREPKYEMAKYS) the chain is Cytoplasmic.

Belongs to the phlebovirus envelope glycoprotein family. Heterodimer with glycoprotein C. As to quaternary structure, heterodimer with glycoprotein N. Homotrimer (postfusion). In terms of processing, specific enzymatic cleavages in vivo yield mature proteins Glycoprotein C, and Glycoprotein N. Post-translationally, glycosylated. Palmitoylated.

It localises to the virion membrane. Its subcellular location is the host Golgi apparatus membrane. The protein localises to the host endoplasmic reticulum membrane. Its function is as follows. Structural component of the virion that interacts with glycoprotein C. It shields the hydrophobic fusion loops of the glycoprotein C, preventing premature fusion. The glycoprotein protrusions are arranged on an icosahedral lattice, with T=12 triangulation. They are able to attach the virion to the host cell receptor CD209/DC-SIGN and to promote fusion of membranes with the late endosome after endocytosis of the virion. Plays a role in the packaging of ribonucleoproteins during virus assembly. Functionally, structural component of the virion that interacts with glycoprotein N. Acts as a class II fusion protein that is activated upon acidification and subsequent repositioning of the glycoprotein N. The glycoprotein protrusions are arranged on an icosahedral lattice, with T=12 triangulation. They are able to attach the virion to the host cell receptor CD209/DC-SIGN and to promote fusion of membranes with the late endosome after endocytosis of the virion. The protein is Envelopment polyprotein (GP) of Amblyomma variegatum (Tropical bont tick).